Consider the following 125-residue polypeptide: Protein ApaG (125 aa).

The ApaG domain maps to 1–125; that stretch reads MINAPRVCVQ…FRLAIPSLIH (125 aa).

This Pectobacterium carotovorum subsp. carotovorum (strain PC1) protein is Protein ApaG.